A 236-amino-acid chain; its full sequence is Ubiquinone biosynthesis O-methyltransferase (236 aa).

S-adenosyl-L-methionine contacts are provided by Arg40, Gly59, Asp80, and Leu124.

This sequence belongs to the methyltransferase superfamily. UbiG/COQ3 family.

The enzyme catalyses a 3-demethylubiquinol + S-adenosyl-L-methionine = a ubiquinol + S-adenosyl-L-homocysteine + H(+). The catalysed reaction is a 3-(all-trans-polyprenyl)benzene-1,2-diol + S-adenosyl-L-methionine = a 2-methoxy-6-(all-trans-polyprenyl)phenol + S-adenosyl-L-homocysteine + H(+). The protein operates within cofactor biosynthesis; ubiquinone biosynthesis. Its function is as follows. O-methyltransferase that catalyzes the 2 O-methylation steps in the ubiquinone biosynthetic pathway. The sequence is that of Ubiquinone biosynthesis O-methyltransferase from Saccharophagus degradans (strain 2-40 / ATCC 43961 / DSM 17024).